The following is a 548-amino-acid chain: CTP synthase (548 aa).

The interval 1-266 (MRVNYIFVTG…DNYICKRFNL (266 aa)) is amidoligase domain. Ser14 provides a ligand contact to CTP. Ser14 is a UTP binding site. ATP is bound by residues 15-20 (SLGKGI) and Asp72. Residues Asp72 and Glu140 each coordinate Mg(2+). CTP-binding positions include 147-149 (DIE), 187-192 (KTKPTQ), and Lys223. Residues 187 to 192 (KTKPTQ) and Lys223 each bind UTP. In terms of domain architecture, Glutamine amidotransferase type-1 spans 291–543 (TVGMVGKYIE…IKAAIEYQHR (253 aa)). Residue Gly353 coordinates L-glutamine. The active-site Nucleophile; for glutamine hydrolysis is the Cys380. Residues 381–384 (LGMQ), Glu404, and Arg471 contribute to the L-glutamine site. Active-site residues include His516 and Glu518.

This sequence belongs to the CTP synthase family. As to quaternary structure, homotetramer.

The catalysed reaction is UTP + L-glutamine + ATP + H2O = CTP + L-glutamate + ADP + phosphate + 2 H(+). It carries out the reaction L-glutamine + H2O = L-glutamate + NH4(+). It catalyses the reaction UTP + NH4(+) + ATP = CTP + ADP + phosphate + 2 H(+). It functions in the pathway pyrimidine metabolism; CTP biosynthesis via de novo pathway; CTP from UDP: step 2/2. Allosterically activated by GTP, when glutamine is the substrate; GTP has no effect on the reaction when ammonia is the substrate. The allosteric effector GTP functions by stabilizing the protein conformation that binds the tetrahedral intermediate(s) formed during glutamine hydrolysis. Inhibited by the product CTP, via allosteric rather than competitive inhibition. Functionally, catalyzes the ATP-dependent amination of UTP to CTP with either L-glutamine or ammonia as the source of nitrogen. Regulates intracellular CTP levels through interactions with the four ribonucleotide triphosphates. In Blochmanniella pennsylvanica (strain BPEN), this protein is CTP synthase.